The primary structure comprises 303 residues: Zinc transporter ZIP9-A (303 aa).

Residues 7 to 27 (ISLLSLAMLVGCYVSGIIPLA) form a helical membrane-spanning segment. A glycan (N-linked (GlcNAc...) asparagine) is linked at Asn29. Helical transmembrane passes span 35 to 55 (LKLV…AVII), 102 to 122 (AYIG…DQIG), 142 to 162 (ITTT…LGAA), 172 to 192 (LIVF…LVSF), and 206 to 226 (HLLV…LGLS). Asn237 carries an N-linked (GlcNAc...) asparagine glycan. 2 consecutive transmembrane segments (helical) span residues 240–260 (GVAM…HVLP) and 282–302 (LEVC…IGHQ).

This sequence belongs to the ZIP transporter (TC 2.A.5) family.

Its subcellular location is the golgi apparatus. The protein resides in the trans-Golgi network membrane. It is found in the cell membrane. It localises to the cytoplasm. The protein localises to the perinuclear region. Its subcellular location is the mitochondrion. The protein resides in the nucleus. The catalysed reaction is Zn(2+)(in) = Zn(2+)(out). Its function is as follows. Transports zinc ions across cell and organelle membranes into the cytoplasm and regulates intracellular zinc homeostasis. Participates in the zinc ions efflux out of the secretory compartments. Regulates intracellular zinc level, resulting in the enhancement of AKT1 and MAPK3/MAPK1 (Erk1/2) phosphorylation in response to the BCR activation. Also functions as a membrane androgen receptor that mediates, through a G protein, the non-classical androgen signaling pathway, characterized by the activation of MAPK3/MAPK1 (Erk1/2) and transcription factors CREB1 or ATF1. Moreover, has dual functions as a membrane-bound androgen receptor and as an androgen-dependent zinc transporter both of which are mediated through an inhibitory G protein (Gi) that mediates both MAP kinase and zinc signaling leading to the androgen-dependent apoptotic process. This Xenopus laevis (African clawed frog) protein is Zinc transporter ZIP9-A (slc39a9-a).